Here is a 52-residue protein sequence, read N- to C-terminus: Small, acid-soluble spore protein K (52 aa).

The segment at 1 to 52 (MGKQAEFWSESKNNSKIDGQPKAKSRFASKRPNGTINTHPQERMRAANQQEE) is disordered.

This sequence belongs to the SspK family.

The protein localises to the spore core. This Bacillus anthracis (strain A0248) protein is Small, acid-soluble spore protein K.